We begin with the raw amino-acid sequence, 421 residues long: Alpha-tubulin N-acetyltransferase 1 (421 aa).

In terms of domain architecture, N-acetyltransferase spans 1-190; it reads MEFPFDVDAL…NNFVIFEGFF (190 aa). Lys-56 is subject to N6-acetyllysine; by autocatalysis. 124 to 137 serves as a coordination point for acetyl-CoA; sequence FYIHESVQRHGHGR. Residue Lys-146 is modified to N6-acetyllysine; by autocatalysis. Residue 160-169 coordinates acetyl-CoA; sequence SQKLLKFLNK. Residues 196-235 form a disordered region; it reads PPAPSLRATRHSRAAAVDPTPAAPARKLPPKRAEGDIKPY. Over residues 209–221 the composition is skewed to low complexity; sequence AAAVDPTPAAPAR. Residues 226-235 show a composition bias toward basic and acidic residues; it reads KRAEGDIKPY. Lys-233 and Lys-244 each carry N6-acetyllysine; by autocatalysis. The tract at residues 252–284 is disordered; sequence PLNRAPRRATPPAHPPPRSSSLGNSPERGPLRP. Phosphoserine is present on residues Ser-272 and Ser-276. At Arg-305 the chain carries Asymmetric dimethylarginine. The disordered stretch occupies residues 306 to 402; it reads LLLAADPGGS…PAQSWTVGGD (97 aa). Ser-315 is modified (phosphoserine). Arg-323 bears the Omega-N-methylarginine mark. The segment covering 342 to 354 has biased composition (polar residues); the sequence is VNSSSPNTGNQDS. Over residues 355-367 the composition is skewed to basic and acidic residues; the sequence is KQGEQETKNRSAS.

This sequence belongs to the acetyltransferase ATAT1 family. As to quaternary structure, component of the BBSome complex. Interacts with AP2 alpha-adaptins, including AP2A2, but not with AP1 gamma-adaptin (AP1G1/AP1G2); this interaction is required for efficient alpha-tubulin acetylation, hence clathrin-coated pits are sites of microtubule acetylation. Post-translationally, autoacetylation strongly increases tubulin acetylation.

It is found in the cytoplasm. Its subcellular location is the membrane. The protein localises to the clathrin-coated pit. It localises to the cell junction. The protein resides in the focal adhesion. It is found in the cell projection. Its subcellular location is the axon. The protein localises to the cytoskeleton. It localises to the spindle. The enzyme catalyses L-lysyl-[alpha-tubulin] + acetyl-CoA = N(6)-acetyl-L-lysyl-[alpha-tubulin] + CoA + H(+). Functionally, specifically acetylates 'Lys-40' in alpha-tubulin on the lumenal side of microtubules. Promotes microtubule destabilization and accelerates microtubule dynamics; this activity may be independent of acetylation activity. Acetylates alpha-tubulin with a slow enzymatic rate, due to a catalytic site that is not optimized for acetyl transfer. Enters the microtubule through each end and diffuses quickly throughout the lumen of microtubules. Acetylates only long/old microtubules because of its slow acetylation rate since it does not have time to act on dynamically unstable microtubules before the enzyme is released. Required for normal sperm flagellar function. Promotes directional cell locomotion and chemotaxis, through AP2A2-dependent acetylation of alpha-tubulin at clathrin-coated pits that are concentrated at the leading edge of migrating cells. May facilitate primary cilium assembly. This chain is Alpha-tubulin N-acetyltransferase 1, found in Homo sapiens (Human).